A 255-amino-acid polypeptide reads, in one-letter code: uncharacterized protein (255 aa).

Residues 3 to 58 (PVERRQIILEMVAEKGIVSIAELTDRMNVSHMTIRRDLQKLEQQGAVVLVSGGVQS) enclose the HTH deoR-type domain. A DNA-binding region (H-T-H motif) is located at residues 20–39 (VSIAELTDRMNVSHMTIRRD).

This is an uncharacterized protein from Escherichia coli (strain K12).